Reading from the N-terminus, the 671-residue chain is TOM1-like protein 6 (671 aa).

Residue Ala-2 is modified to N-acetylalanine. Residues Ala-15–Pro-144 form the VHS domain. Ser-147 is modified (phosphoserine). A GAT domain is found at Glu-229–Ser-317. 2 disordered regions span residues Pro-320–Lys-620 and Gly-636–Ile-671. Over residues Ala-334–Ala-362 the composition is skewed to low complexity. The span at Asp-372–Phe-382 shows a compositional bias: acidic residues. The segment covering Ser-395–Ser-405 has biased composition (polar residues). Residues Asn-407–Leu-417 are compositionally biased toward low complexity. A compositionally biased stretch (pro residues) spans Ser-444–Ala-459. Over residues Ala-483–Tyr-554 the composition is skewed to low complexity. Composition is skewed to polar residues over residues Ala-562–Pro-598 and Gln-605–Ser-616. Residue Ser-596 is modified to Phosphoserine. A compositionally biased stretch (low complexity) spans Asn-647–Ser-663.

This sequence belongs to the TOM1 family. In terms of tissue distribution, ubiquitously expressed.

It is found in the endosome. Its subcellular location is the multivesicular body. The protein resides in the cytoplasm. It localises to the early endosome membrane. Acts as a gatekeeper for degradative protein sorting to the vacuole. Plays a role in recognition of ubiquitinated PIN2 auxin carrier at the plasma membrane and further to its endocytic sorting. Binds ubiquitin in vitro. Might contribute to the loading of the ESCRT machinery. The protein is TOM1-like protein 6 of Arabidopsis thaliana (Mouse-ear cress).